The following is a 448-amino-acid chain: MRKYFGTDGVRGVANTELTCDLAYKLGRAGGFVLAQGDHRVKVVVGKDTRISGDMLEASLIAGLMSVGCDVITVGIIPTPAVAYLTRKYGADCGVVISASHNPVEYNGIKFFNKNGYKLDDEIELKIEEYIDDIDKIDCLPIGENVGRKLHEHCAQRDYVDYLKSIISTDFKGLKVVLDCANGASYKVAPIVFDELGASVISINSSPDGNNINYKCGSTHPEQLQRAVLEHNADLGLAYDGDADRLIAVNEKGQIVDGDHIMILSALNLKKNNKLAQDTLVVTVMSNIGLTIAAKENGINLSTTAVGDRYVLEDMVKNGYNLGGEQSGHMIFLDYNTTGDGVLSSLILANIILQEKKPLSEIASIMSQYPQVLVNATIKNENKNKYMEYPEIKTEIERIESILDGNGRVLIRPSGTEPLVRVMLEGKEEGQIKELATNLANLIQEKLS.

Ser-100 functions as the Phosphoserine intermediate in the catalytic mechanism. Ser-100, Asp-240, Asp-242, and Asp-244 together coordinate Mg(2+). At Ser-100 the chain carries Phosphoserine.

This sequence belongs to the phosphohexose mutase family. The cofactor is Mg(2+). In terms of processing, activated by phosphorylation.

It catalyses the reaction alpha-D-glucosamine 1-phosphate = D-glucosamine 6-phosphate. Catalyzes the conversion of glucosamine-6-phosphate to glucosamine-1-phosphate. The protein is Phosphoglucosamine mutase of Clostridioides difficile (strain 630) (Peptoclostridium difficile).